Reading from the N-terminus, the 445-residue chain is Crotonyl-CoA reductase (445 aa).

Glu149 is a Zn(2+) binding site.

Belongs to the zinc-containing alcohol dehydrogenase family. Crotonyl-CoA carboxylase/reductase subfamily. As to quaternary structure, homodimer. It depends on Zn(2+) as a cofactor.

It catalyses the reaction butanoyl-CoA + NADP(+) = (2E)-butenoyl-CoA + NADPH + H(+). With respect to regulation, inhibited by NADPH at concentrations above 200 uM, by MgCl (30%), by ZnCl(2) (55%), and by CoCl, MnCl and CaCl (100%). Also inhibited by iodoacetamide, N-ethylmaleamide, the thiol group inhibitor beta-chloromercuribenzoate, palmitoyl-CoA and myristoyl-CoA. Its function is as follows. Catalyzes the conversion of crotonyl-CoA to butyryl-CoA. It uses only NADP as electron donor. May have a role in providing butyryl-CoA as a starter unit for straight-chain fatty acid biosynthesis. This Streptomyces avermitilis (strain ATCC 31267 / DSM 46492 / JCM 5070 / NBRC 14893 / NCIMB 12804 / NRRL 8165 / MA-4680) protein is Crotonyl-CoA reductase (ccrA2).